The chain runs to 134 residues: Large-conductance mechanosensitive channel (134 aa).

A run of 2 helical transmembrane segments spans residues 16-36 (VIDL…VTAL) and 81-101 (GDFL…FIIV).

The protein belongs to the MscL family. In terms of assembly, homopentamer.

It localises to the cell inner membrane. In terms of biological role, channel that opens in response to stretch forces in the membrane lipid bilayer. May participate in the regulation of osmotic pressure changes within the cell. This chain is Large-conductance mechanosensitive channel, found in Xylella fastidiosa (strain 9a5c).